Consider the following 187-residue polypeptide: MDQPKYFSSLLGFLLKKEYEKDEDCKSLETLKEMVFSEQDDVTLELIEFTYNKCFEIIQKASYSDMQISTFENIVKESDFTTVQQECLNKFWKVNKKKIHEIIYKTTRFNNSLQKISWRIDVKTKSKEISEINEPVSIVELKLKNTNTNNNNNNKNDLIRFEMDKNQLEETLQQINSIQKHLQAKSL.

One can recognise a COMM domain in the interval 112-186 (SLQKISWRID…SIQKHLQAKS (75 aa)).

The protein belongs to the COMM domain-containing protein 1 family. In terms of assembly, component of the commander complex consisting of the CCC subcomplex and the retriever subcomplex.

Its function is as follows. Scaffold protein in the commander complex that is essential for endosomal recycling of transmembrane cargos; the commander complex is composed of the CCC subcomplex and the retriever subcomplex. The sequence is that of COMM domain-containing protein 1 (commd1) from Dictyostelium discoideum (Social amoeba).